The chain runs to 493 residues: Glycerol kinase 2 (493 aa).

Residue S12 participates in ADP binding. Positions 12 and 13 each coordinate ATP. S12 contacts sn-glycerol 3-phosphate. Residue K16 coordinates ADP. 4 residues coordinate sn-glycerol 3-phosphate: R82, E83, Y134, and D243. Glycerol contacts are provided by R82, E83, Y134, D243, and Q244. ADP is bound by residues T265 and G308. Residues T265, G308, and N312 each coordinate ATP. N413 is an ADP binding site.

This sequence belongs to the FGGY kinase family. As to quaternary structure, homotetramer and homodimer (in equilibrium).

It carries out the reaction glycerol + ATP = sn-glycerol 3-phosphate + ADP + H(+). It participates in polyol metabolism; glycerol degradation via glycerol kinase pathway; sn-glycerol 3-phosphate from glycerol: step 1/1. Its activity is regulated as follows. Activated by phosphorylation and inhibited by fructose 1,6-bisphosphate (FBP). Its function is as follows. Key enzyme in the regulation of glycerol uptake and metabolism. Catalyzes the phosphorylation of glycerol to yield sn-glycerol 3-phosphate. In Clostridium tetani (strain Massachusetts / E88), this protein is Glycerol kinase 2.